Consider the following 362-residue polypeptide: Ribosomal RNA large subunit methyltransferase F (362 aa).

Residues 1–28 are compositionally biased toward basic residues; it reads MNTPLKPKHGQKTNRKPKANKPVVKKQQ. Positions 1 to 40 are disordered; it reads MNTPLKPKHGQKTNRKPKANKPVVKKQQTKQPPTHKVQGE.

Belongs to the methyltransferase superfamily. METTL16/RlmF family.

The protein resides in the cytoplasm. It carries out the reaction adenosine(1618) in 23S rRNA + S-adenosyl-L-methionine = N(6)-methyladenosine(1618) in 23S rRNA + S-adenosyl-L-homocysteine + H(+). Functionally, specifically methylates the adenine in position 1618 of 23S rRNA. The polypeptide is Ribosomal RNA large subunit methyltransferase F (Vibrio cholerae serotype O1 (strain M66-2)).